The following is a 100-amino-acid chain: Integration host factor subunit alpha (100 aa).

This sequence belongs to the bacterial histone-like protein family. Heterodimer of an alpha and a beta chain.

Functionally, this protein is one of the two subunits of integration host factor, a specific DNA-binding protein that functions in genetic recombination as well as in transcriptional and translational control. Involved in hydrogenase gene expression. This is Integration host factor subunit alpha (ihfA) from Rhodobacter capsulatus (Rhodopseudomonas capsulata).